We begin with the raw amino-acid sequence, 273 residues long: Shikimate dehydrogenase (NADP(+)) (273 aa).

Shikimate contacts are provided by residues 15–17 (SKS) and Thr-62. Lys-66 (proton acceptor) is an active-site residue. An NADP(+)-binding site is contributed by Glu-78. Asn-87 and Asp-103 together coordinate shikimate. NADP(+)-binding positions include 127 to 131 (GAGGA), 151 to 156 (NRTHDK), and Met-214. Residue Tyr-216 coordinates shikimate. An NADP(+)-binding site is contributed by Gly-238.

It belongs to the shikimate dehydrogenase family. In terms of assembly, homodimer.

The catalysed reaction is shikimate + NADP(+) = 3-dehydroshikimate + NADPH + H(+). Its pathway is metabolic intermediate biosynthesis; chorismate biosynthesis; chorismate from D-erythrose 4-phosphate and phosphoenolpyruvate: step 4/7. In terms of biological role, involved in the biosynthesis of the chorismate, which leads to the biosynthesis of aromatic amino acids. Catalyzes the reversible NADPH linked reduction of 3-dehydroshikimate (DHSA) to yield shikimate (SA). This is Shikimate dehydrogenase (NADP(+)) from Shewanella denitrificans (strain OS217 / ATCC BAA-1090 / DSM 15013).